Consider the following 922-residue polypeptide: Coronin-7 (922 aa).

4 WD repeats span residues 75–115 (CHSD…EALP), 124–163 (PEEL…PLTE), 166–205 (AHKD…QASQ), and 209–253 (AHEN…SALA). A disordered region spans residues 419 to 467 (DTDLSEGFSSPSSLMSPSTPSSLGPSLSSTSGIGTSPSQRSLQSLLGPS). The span at 427 to 456 (SSPSSLMSPSTPSSLGPSLSSTSGIGTSPS) shows a compositional bias: low complexity. 2 positions are modified to phosphoserine: Ser459 and Ser462. Lys469 participates in a covalent cross-link: Glycyl lysine isopeptide (Lys-Gly) (interchain with G-Cter in ubiquitin). WD repeat units follow at residues 539–581 (QNGT…NVLT), 589–629 (GHTE…ERLK), 632–671 (GHQD…LPLQ), and 725–765 (DVAP…PFFL). The segment at 858-922 (GMTPVSQAPR…FEGVDEDEWD (65 aa)) is disordered. The span at 881–893 (LEEKSDQQKKEEL) shows a compositional bias: basic and acidic residues. Ser912 carries the phosphoserine modification.

The protein belongs to the WD repeat coronin family. Interacts with clathrin adapter AP1 complex. This interaction takes place at Golgi membranes and not AP1-positive endosomal membranes. Interacts (when ubiquitinated at Lys-469) with EPS15. Post-translationally, the membrane-associated form is phosphorylated on tyrosine residues. In terms of processing, ubiquitinated via 'Lys-33'-linked ubiquitin chains by the BCR(KLHL20) E3 ubiquitin ligase complex: 'Lys-33'-linked ubiquitination promotes interaction with EPS15 and facilitates actin polymerization at the trans-Golgi network, thereby facilitating post-Golgi trafficking. Deubiquitinated by ZRANB1/TRABID. As to expression, in the adult, widely expressed with highest levels in brain, thymus and kidney and low levels in skeletal and heart muscle. Not expressed in lung. In the eye, strongly expressed in the outer plexiform layer of the retina. In the intestine, expressed both in terminally differentiated epithelial cells and in crypt epithelium. In the embryo, strongest expression is seen in brain, thymus, intestine, apical epidermal layers of the skin and developing lens fibers of the eye.

It is found in the golgi apparatus membrane. Its subcellular location is the golgi apparatus. The protein localises to the trans-Golgi network. The protein resides in the cytoplasmic vesicle. It localises to the cytoplasm. It is found in the cytosol. Its function is as follows. F-actin regulator involved in anterograde Golgi to endosome transport: upon ubiquitination via 'Lys-33'-linked ubiquitin chains by the BCR(KLHL20) E3 ubiquitin ligase complex, interacts with EPS15 and localizes to the trans-Golgi network, where it promotes actin polymerization, thereby facilitating post-Golgi trafficking. May play a role in the maintenance of the Golgi apparatus morphology. The polypeptide is Coronin-7 (Coro7) (Mus musculus (Mouse)).